A 662-amino-acid chain; its full sequence is UvrABC system protein B (662 aa).

Residues 31-188 (DNIEGGEKAQ…NDLVDIQFER (158 aa)) enclose the Helicase ATP-binding domain. 44 to 51 (GATGTGKT) contributes to the ATP binding site. A Beta-hairpin motif is present at residues 97-120 (YYDYYQPEAYVPSSDTYIEKDSSV). The Helicase C-terminal domain maps to 435 to 601 (QIDDLLGEIN…TIKKEIRDLI (167 aa)). Positions 626–661 (KELVKKLEKQMQEAVEVLDFELAAQIRDMMLEVKAL) constitute a UVR domain.

The protein belongs to the UvrB family. As to quaternary structure, forms a heterotetramer with UvrA during the search for lesions. Interacts with UvrC in an incision complex.

The protein resides in the cytoplasm. Its function is as follows. The UvrABC repair system catalyzes the recognition and processing of DNA lesions. A damage recognition complex composed of 2 UvrA and 2 UvrB subunits scans DNA for abnormalities. Upon binding of the UvrA(2)B(2) complex to a putative damaged site, the DNA wraps around one UvrB monomer. DNA wrap is dependent on ATP binding by UvrB and probably causes local melting of the DNA helix, facilitating insertion of UvrB beta-hairpin between the DNA strands. Then UvrB probes one DNA strand for the presence of a lesion. If a lesion is found the UvrA subunits dissociate and the UvrB-DNA preincision complex is formed. This complex is subsequently bound by UvrC and the second UvrB is released. If no lesion is found, the DNA wraps around the other UvrB subunit that will check the other stand for damage. This chain is UvrABC system protein B, found in Streptococcus pneumoniae (strain ATCC 700669 / Spain 23F-1).